We begin with the raw amino-acid sequence, 182 residues long: Early nodulin-like protein 14 (182 aa).

The signal sequence occupies residues 1-28; that stretch reads MFLSASMASSSLHVAIFSLIFLFSLAAA. A Phytocyanin domain is found at 29 to 133; that stretch reads NEVTVGGKSG…GQKLSLVVIS (105 aa). Residues Cys-87 and Cys-121 are joined by a disulfide bond. Residues Asn-88 and Asn-95 are each glycosylated (N-linked (GlcNAc...) asparagine). Ser-160 is lipidated: GPI-anchor amidated serine. A propeptide spans 161–182 (removed in mature form); it reads GSVRLGGCYVVLGLVLGLCAWF.

This sequence belongs to the early nodulin-like (ENODL) family. In terms of assembly, interacts strongly and specifically with the extracellular domain of FERONIA at the synergid cell surface. In terms of tissue distribution, mostly expressed in seedlings and flowers, and, to a lower extent, in roots, stems and seeds, but barely in leaves.

Its subcellular location is the cell membrane. In terms of biological role, may act as a carbohydrate transporter. Required, together with ENODL11, ENODL12, ENODL13, ENODL14 and ENODL15, for male-female communication and pollen tube reception and burst at the synergid cell surface of the female gametophyte. This is Early nodulin-like protein 14 from Arabidopsis thaliana (Mouse-ear cress).